The sequence spans 569 residues: Falcipain-1 (569 aa).

The Cytoplasmic portion of the chain corresponds to 1-35 (MVAIKEMKEFAFARPSLVETLNKKKKFLKKKEKRT). The propeptide at 1–332 (MVAIKEMKEF…KRNEKDIFSK (332 aa)) is activation peptide. The helical; Signal-anchor for type II membrane protein transmembrane segment at 36-56 (FVLSIYAFITFIIFCIGILYF) threads the bilayer. The Lumenal segment spans residues 57–569 (TNKSSAHNNN…IGEEVFYPIL (513 aa)). N-linked (GlcNAc...) asparagine glycosylation is found at Asn58, Asn98, Asn121, and Asn127. The segment at 97–118 (LNESSNEEDEEKYTLNSETYNN) is disordered. Cystine bridges form between Cys354–Cys395, Cys388–Cys428, and Cys413–Cys433. Cys357 is a catalytic residue. N-linked (GlcNAc...) asparagine glycans are attached at residues Asn479 and Asn487. The cysteines at positions 482 and 558 are disulfide-linked. Catalysis depends on residues His488 and Asn533.

Belongs to the peptidase C1 family. Post-translationally, contains disulfide bonds.

It is found in the membrane. Its subcellular location is the cytoplasmic granule. Cysteine protease. In the mosquito midgut, required for parasite development. This is Falcipain-1 from Plasmodium falciparum (isolate 3D7).